A 96-amino-acid chain; its full sequence is MKLRPLHDRIIVKRLEGEEKTAGGLFIPDTAKEKPQKGEVIAVGNGKKNDEGKCAPLDVKVGDSILFGKYAGTEVKVDGDEFLMMREDDVLAVIEK.

This sequence belongs to the GroES chaperonin family. In terms of assembly, heptamer of 7 subunits arranged in a ring. Interacts with the chaperonin GroEL.

It is found in the cytoplasm. Functionally, together with the chaperonin GroEL, plays an essential role in assisting protein folding. The GroEL-GroES system forms a nano-cage that allows encapsulation of the non-native substrate proteins and provides a physical environment optimized to promote and accelerate protein folding. GroES binds to the apical surface of the GroEL ring, thereby capping the opening of the GroEL channel. This is Co-chaperonin GroES from Trichlorobacter lovleyi (strain ATCC BAA-1151 / DSM 17278 / SZ) (Geobacter lovleyi).